The sequence spans 314 residues: Glutathione synthetase (314 aa).

One can recognise an ATP-grasp domain in the interval 125–309 (KLFVMNFPQL…VAAKVWDTIE (185 aa)). 151–207 (RDKHGAVVMKPLHGHGGAAVFRVMPQDMNFGSLFDMFTVTFKEPWVIQQFIPEVKHG) is an ATP binding site. Mg(2+) is bound by residues Glu280 and Asn282.

Belongs to the prokaryotic GSH synthase family. It depends on Mg(2+) as a cofactor. The cofactor is Mn(2+).

The catalysed reaction is gamma-L-glutamyl-L-cysteine + glycine + ATP = glutathione + ADP + phosphate + H(+). Its pathway is sulfur metabolism; glutathione biosynthesis; glutathione from L-cysteine and L-glutamate: step 2/2. This is Glutathione synthetase from Bradyrhizobium diazoefficiens (strain JCM 10833 / BCRC 13528 / IAM 13628 / NBRC 14792 / USDA 110).